The primary structure comprises 540 residues: Threonine--tRNA ligase catalytic subunit (540 aa).

A catalytic region spans residues 134-428; that stretch reads DHRIIGERLD…LLEHFRGKLP (295 aa). Residues Cys226, His277, and His405 each contribute to the Zn(2+) site.

This sequence belongs to the class-II aminoacyl-tRNA synthetase family. Homodimer. Probably interacts with its editing subunit. It depends on Zn(2+) as a cofactor.

The protein resides in the cytoplasm. The catalysed reaction is tRNA(Thr) + L-threonine + ATP = L-threonyl-tRNA(Thr) + AMP + diphosphate + H(+). Its function is as follows. Catalyzes the attachment of threonine to tRNA(Thr) in a two-step reaction: L-threonine is first activated by ATP to form Thr-AMP and then transferred to the acceptor end of tRNA(Thr). Also activates L-serine and transfers it to tRNA(Thr) but cannot deacylate incorrectly charged amino acid; unlike most archaea the editing function is found in a freestanding protein. The sequence is that of Threonine--tRNA ligase catalytic subunit from Sulfurisphaera tokodaii (strain DSM 16993 / JCM 10545 / NBRC 100140 / 7) (Sulfolobus tokodaii).